The sequence spans 432 residues: D-amino acid dehydrogenase (432 aa).

Residue 3–17 (VVILGSGVVGVASAW) participates in FAD binding.

The protein belongs to the DadA oxidoreductase family. Requires FAD as cofactor.

It catalyses the reaction a D-alpha-amino acid + A + H2O = a 2-oxocarboxylate + AH2 + NH4(+). It participates in amino-acid degradation; D-alanine degradation; NH(3) and pyruvate from D-alanine: step 1/1. Functionally, oxidative deamination of D-amino acids. This chain is D-amino acid dehydrogenase, found in Escherichia coli O127:H6 (strain E2348/69 / EPEC).